The following is a 917-amino-acid chain: Isoleucine--tRNA ligase (917 aa).

The short motif at 59 to 69 is the 'HIGH' region element; the sequence is PYANGHIHIGH. Glu569 is a binding site for L-isoleucyl-5'-AMP. A 'KMSKS' region motif is present at residues 610-614; the sequence is KMSKS. Lys613 is an ATP binding site. The Zn(2+) site is built by Cys890, Cys893, Cys905, and Cys908.

The protein belongs to the class-I aminoacyl-tRNA synthetase family. IleS type 1 subfamily. As to quaternary structure, monomer. The cofactor is Zn(2+).

It localises to the cytoplasm. The enzyme catalyses tRNA(Ile) + L-isoleucine + ATP = L-isoleucyl-tRNA(Ile) + AMP + diphosphate. Its function is as follows. Catalyzes the attachment of isoleucine to tRNA(Ile). As IleRS can inadvertently accommodate and process structurally similar amino acids such as valine, to avoid such errors it has two additional distinct tRNA(Ile)-dependent editing activities. One activity is designated as 'pretransfer' editing and involves the hydrolysis of activated Val-AMP. The other activity is designated 'posttransfer' editing and involves deacylation of mischarged Val-tRNA(Ile). The chain is Isoleucine--tRNA ligase from Campylobacter jejuni subsp. jejuni serotype O:2 (strain ATCC 700819 / NCTC 11168).